Reading from the N-terminus, the 37-residue chain is Large ribosomal subunit protein bL36 (37 aa).

Belongs to the bacterial ribosomal protein bL36 family.

The protein is Large ribosomal subunit protein bL36 of Micrococcus luteus (strain ATCC 4698 / DSM 20030 / JCM 1464 / CCM 169 / CCUG 5858 / IAM 1056 / NBRC 3333 / NCIMB 9278 / NCTC 2665 / VKM Ac-2230) (Micrococcus lysodeikticus).